We begin with the raw amino-acid sequence, 306 residues long: 4-hydroxybenzoate geranyltransferase 2 (306 aa).

A run of 8 helical transmembrane segments spans residues 38–58 (IGSWLLAWPAFWSVALIADLG), 61–81 (PKMLAIFGWWAVWIRGAGCTI), 119–139 (LFIGLGVLYQFNILTLALAIV), 153–173 (ITYWPQAFLGVMISWGALLGS), 178–198 (GSVVPSIAYPLYISSFFWTLV), 229–249 (IWITWFGIGCIGALLLGGFIV), 251–271 (IGLPYYVFLAIATGQLIWQIF), and 285–305 (FVSNQWFGAIIFTGILVGRLF).

This sequence belongs to the UbiA prenyltransferase family. Mg(2+) serves as cofactor. Expressed only in roots.

The protein resides in the endoplasmic reticulum membrane. It carries out the reaction 4-hydroxybenzoate + (2E)-geranyl diphosphate = 3-geranyl-4-hydroxybenzoate + diphosphate. Prenyltransferase involved in the biosynthesis of shikonin, a naphthoquinone secondary metabolite. Could accept only geranyl diphosphate and not dimethylallyl diphosphate, farnesyl diphosphate, or geranylgeranyl diphosphate as substrate. This Lithospermum erythrorhizon (Purple gromwell) protein is 4-hydroxybenzoate geranyltransferase 2 (PGT-2).